The primary structure comprises 403 residues: LIM/homeobox protein Lhx1 (403 aa).

LIM zinc-binding domains lie at C4–D54 and C63–D117. Over residues I131–P147 the composition is skewed to polar residues. Disordered stretches follow at residues I131–T185 and P318–S366. Basic and acidic residues predominate over residues D150–G166. Residues R179–K238 constitute a DNA-binding region (homeobox).

Interacts with ldb1 via the tandem LIM domains. Both LIM domains are required for optimal binding and binding relieves the inhibitory effect of the LIM domains and activates lhx1. Binding to ldb1 also prevents degradation of ldb1 by rnf12. The stoichiometry of lhx1 and ldb1 is important for their function and an excess of ldb1 can inhibit lhx1 function. Interacts with the N-terminal region of rnf12 by a homeobox-dependent mechanism. In terms of tissue distribution, exhibits a biphasic expression pattern. Initially localized to the Spemann organizer region of gastrulae, leading to expression in prechordal mesoderm and notochord. In the second phase, expressed in the lateral mesoderm and neural plate, eventually concentrating in the pronephros and the CNS. Expressed in the pronephros primordium by late gastrula (stage 12.5) and becomes restricted to the tips of the tubules and ducts as kidney development progresses. In the CNS, becomes progressively recognizable in anatomically distinct structures during larval development. Within the forebrain, shows almost identical expression to lhx5 in the diencephalon, being expressed in alternating stripes to lhx2 and lhx9. Expressed in the diencephalic pretectum within prosomere 1, hypothalamus, ventral thalamus and zona limitans intrathalamica. In the telencephalon, the expression pattern is distinct from lhx5, being localized in the pallium and subpallium. Also expressed in the ventral territories of midbrain (mesencephalon) and hindbrain (rhombencephalon), being expressed in the mesencephalic tegmentum and hindbrain reticular formation. Also shows intense expression in the cerebellum including Purkinje cells.

It localises to the nucleus. Its function is as follows. Involved in the establishment of the body plan via the Spemann organizer during gastrulation. Transcriptional activator required to induce organizer gene expression downstream of siamois. Promotes head formation by binding to 5'-TAAT'-3' elements in the promoters of head organizer genes cer1 and gsc to stimulate expression. Binds as a complex with siamois and mix-A/mix.1 to the cer1 promoter, and with ldb1 and otx2 to the gsc promoter. Also involved in neural induction via the organizer, including a role in notochord formation. Acts synergistically with ldb1 and ssbp in subsequent axis formation. Involved in kidney development, acting synergistically with pax8 to establish the pronephric primordium in late gastrulae/early neurulae and with pax2 during pronephric morphogenesis in tailbud stages. Has a later role in mediating the activity of inhibitors of ventralization. In Xenopus laevis (African clawed frog), this protein is LIM/homeobox protein Lhx1 (lhx1).